The sequence spans 140 residues: Large-conductance mechanosensitive channel (140 aa).

The next 3 membrane-spanning stretches (helical) occupy residues Glu7–Phe27, Ile30–Val50, and Gly64–Val84.

It belongs to the MscL family. As to quaternary structure, homopentamer.

The protein resides in the cell membrane. Its function is as follows. Channel that opens in response to stretch forces in the membrane lipid bilayer. May participate in the regulation of osmotic pressure changes within the cell. The chain is Large-conductance mechanosensitive channel from Staphylococcus carnosus (strain TM300).